Reading from the N-terminus, the 968-residue chain is Putative pectinesterase/pectinesterase inhibitor 26 (968 aa).

Residues 33–53 (IGISVAVLVAIIISSTVTIAI) form a helical membrane-spanning segment. The tract at residues 71-230 (LTPAASLKTV…TEFTSNSLAI (160 aa)) is pectinesterase inhibitor 26 A. N-linked (GlcNAc...) asparagine glycans are attached at residues asparagine 101, asparagine 158, asparagine 219, asparagine 295, asparagine 352, asparagine 400, asparagine 464, asparagine 541, asparagine 559, and asparagine 603. The tract at residues 265–430 (LTPAASLRNV…RKFTSNSLAI (166 aa)) is pectinesterase inhibitor 26 B. Positions 453 to 614 (PTPSSVLRTV…TEFTSNSLAI (162 aa)) are pectinesterase inhibitor 26 C. The tract at residues 660–954 (HVTVAADGSG…FTVKYFLRGD (295 aa)) is pectinesterase 26. Position 735 (threonine 735) interacts with substrate. N-linked (GlcNAc...) asparagine glycosylation occurs at asparagine 737. Substrate is bound at residue glutamine 765. The active-site Proton donor; for pectinesterase activity is the aspartate 788. Cysteine 802 and cysteine 822 are joined by a disulfide. The active-site Nucleophile; for pectinesterase activity is the aspartate 809. N-linked (GlcNAc...) asparagine glycosylation is present at asparagine 863. 2 residues coordinate substrate: arginine 872 and tryptophan 874. Residue asparagine 900 is glycosylated (N-linked (GlcNAc...) asparagine).

It in the N-terminal section; belongs to the PMEI family. The protein in the C-terminal section; belongs to the pectinesterase family. Expressed in flowers.

The protein resides in the membrane. The enzyme catalyses [(1-&gt;4)-alpha-D-galacturonosyl methyl ester](n) + n H2O = [(1-&gt;4)-alpha-D-galacturonosyl](n) + n methanol + n H(+). Its pathway is glycan metabolism; pectin degradation; 2-dehydro-3-deoxy-D-gluconate from pectin: step 1/5. In terms of biological role, acts in the modification of cell walls via demethylesterification of cell wall pectin. In Arabidopsis thaliana (Mouse-ear cress), this protein is Putative pectinesterase/pectinesterase inhibitor 26 (PME26).